A 176-amino-acid chain; its full sequence is Ribosome maturation factor RimM (176 aa).

Residues Glu-101–Leu-170 enclose the PRC barrel domain.

This sequence belongs to the RimM family. Binds ribosomal protein uS19.

It is found in the cytoplasm. In terms of biological role, an accessory protein needed during the final step in the assembly of 30S ribosomal subunit, possibly for assembly of the head region. Essential for efficient processing of 16S rRNA. May be needed both before and after RbfA during the maturation of 16S rRNA. It has affinity for free ribosomal 30S subunits but not for 70S ribosomes. This chain is Ribosome maturation factor RimM, found in Solibacter usitatus (strain Ellin6076).